The primary structure comprises 177 residues: Transcriptional regulator MET31 (177 aa).

The C2H2-type zinc finger occupies 95-117; the sequence is YSCAKCQLKFSRSSDLRRHEKVH.

In terms of assembly, interacts with MET4 and MET28.

It is found in the cytoplasm. The protein localises to the nucleus. Its function is as follows. Auxiliary transcriptional regulator of sulfur amino acid metabolism. Involved in the transcriptional activation of MET28. In Saccharomyces cerevisiae (strain ATCC 204508 / S288c) (Baker's yeast), this protein is Transcriptional regulator MET31 (MET31).